A 140-amino-acid chain; its full sequence is ATP synthase epsilon chain (140 aa).

The protein belongs to the ATPase epsilon chain family. F-type ATPases have 2 components, CF(1) - the catalytic core - and CF(0) - the membrane proton channel. CF(1) has five subunits: alpha(3), beta(3), gamma(1), delta(1), epsilon(1). CF(0) has three main subunits: a, b and c.

The protein resides in the cell inner membrane. Its function is as follows. Produces ATP from ADP in the presence of a proton gradient across the membrane. This chain is ATP synthase epsilon chain, found in Legionella pneumophila (strain Paris).